The sequence spans 156 residues: ATP synthase subunit b (156 aa).

The chain crosses the membrane as a helical span at residues 3-23 (ITLTIFAQALAFAGLIWIVAT).

The protein belongs to the ATPase B chain family. F-type ATPases have 2 components, F(1) - the catalytic core - and F(0) - the membrane proton channel. F(1) has five subunits: alpha(3), beta(3), gamma(1), delta(1), epsilon(1). F(0) has three main subunits: a(1), b(2) and c(10-14). The alpha and beta chains form an alternating ring which encloses part of the gamma chain. F(1) is attached to F(0) by a central stalk formed by the gamma and epsilon chains, while a peripheral stalk is formed by the delta and b chains.

The protein localises to the cell inner membrane. Its function is as follows. F(1)F(0) ATP synthase produces ATP from ADP in the presence of a proton or sodium gradient. F-type ATPases consist of two structural domains, F(1) containing the extramembraneous catalytic core and F(0) containing the membrane proton channel, linked together by a central stalk and a peripheral stalk. During catalysis, ATP synthesis in the catalytic domain of F(1) is coupled via a rotary mechanism of the central stalk subunits to proton translocation. Component of the F(0) channel, it forms part of the peripheral stalk, linking F(1) to F(0). This is ATP synthase subunit b from Xanthomonas campestris pv. campestris (strain 8004).